The sequence spans 196 residues: Protein/nucleic acid deglycase 3 (196 aa).

C106 functions as the Nucleophile in the catalytic mechanism. Position 106 is a cysteine sulfinic acid (-SO2H); alternate (C106).

It belongs to the peptidase C56 family. As to quaternary structure, homodimer. In terms of processing, cys-106 is easily oxidized to sulfinic acid.

It carries out the reaction N(omega)-(1-hydroxy-2-oxopropyl)-L-arginyl-[protein] + H2O = lactate + L-arginyl-[protein] + H(+). The catalysed reaction is N(6)-(1-hydroxy-2-oxopropyl)-L-lysyl-[protein] + H2O = lactate + L-lysyl-[protein] + H(+). The enzyme catalyses S-(1-hydroxy-2-oxopropyl)-L-cysteinyl-[protein] + H2O = lactate + L-cysteinyl-[protein] + H(+). It catalyses the reaction N(omega)-(1-hydroxy-2-oxoethyl)-L-arginyl-[protein] + H2O = L-arginyl-[protein] + glycolate + H(+). It carries out the reaction N(6)-(1-hydroxy-2-oxoethyl)-L-lysyl-[protein] + H2O = glycolate + L-lysyl-[protein] + H(+). The catalysed reaction is S-(1-hydroxy-2-oxoethyl)-L-cysteinyl-[protein] + H2O = glycolate + L-cysteinyl-[protein] + H(+). The enzyme catalyses N(2)-(1-hydroxy-2-oxopropyl)-dGTP + H2O = lactate + dGTP + H(+). It catalyses the reaction N(2)-(1-hydroxy-2-oxopropyl)-GTP + H2O = lactate + GTP + H(+). It carries out the reaction N(2)-(1-hydroxy-2-oxopropyl)-GDP + H2O = lactate + GDP + H(+). The catalysed reaction is N(2)-(1-hydroxy-2-oxopropyl)-GMP + H2O = lactate + GMP + H(+). The enzyme catalyses N(2)-(1-hydroxy-2-oxoethyl)-dGTP + H2O = dGTP + glycolate + H(+). It catalyses the reaction N(2)-(1-hydroxy-2-oxoethyl)-GTP + H2O = glycolate + GTP + H(+). It carries out the reaction N(2)-(1-hydroxy-2-oxoethyl)-GDP + H2O = glycolate + GDP + H(+). The catalysed reaction is N(2)-(1-hydroxy-2-oxoethyl)-GMP + H2O = glycolate + GMP + H(+). The enzyme catalyses an N(2)-(1-hydroxy-2-oxopropyl)-guanosine in RNA + H2O = a guanosine in RNA + lactate + H(+). It catalyses the reaction an N(2)-(1-hydroxy-2-oxopropyl)-2'-deoxyguanosine in DNA + H2O = a 2'-deoxyguanosine in DNA + lactate + H(+). It carries out the reaction an N(2)-(1-hydroxy-2-oxoethyl)-guanosine in RNA + H2O = a guanosine in RNA + glycolate + H(+). The catalysed reaction is an N(2)-(1-hydroxy-2-oxoethyl)-2'-deoxyguanosine in DNA + H2O = a 2'-deoxyguanosine in DNA + glycolate + H(+). Its activity is regulated as follows. Glyoxalase activity is inhibited by zinc ions. Active as a chaperone in both its reduced and oxidized states, and is more active in its oxidized form. Its function is as follows. Protein and nucleotide deglycase that catalyzes the deglycation of the Maillard adducts formed between amino groups of proteins or nucleotides and reactive carbonyl groups of glyoxals. Thus, functions as a protein deglycase that repairs methylglyoxal- and glyoxal-glycated proteins, and releases repaired proteins and lactate or glycolate, respectively. Deglycates cysteine, arginine and lysine residues in proteins, and thus reactivates these proteins by reversing glycation by glyoxals. Is able to repair glycated serum albumin, collagen, glyceraldehyde-3-phosphate dehydrogenase, and fructose biphosphate aldolase. Acts on early glycation intermediates (hemithioacetals and aminocarbinols), preventing the formation of Schiff bases and advanced glycation endproducts (AGE) that cause irreversible damage. Also functions as a nucleotide deglycase able to repair glycated guanine in the free nucleotide pool (GTP, GDP, GMP, dGTP) and in DNA and RNA. Is thus involved in a major nucleotide repair system named guanine glycation repair (GG repair), dedicated to reversing methylglyoxal and glyoxal damage via nucleotide sanitization and direct nucleic acid repair. However, is less efficient than Hsp31 and YhbO, suggesting that YajL might be preferentially dedicated to protein repair. Displays a covalent chaperone activity with sulfenylated thiol proteins by forming mixed disulfides with members of the thiol proteome, and preferentially with sulfenylated cellular proteins, upon oxidative stress; these mixed disulfides can be subsequently reduced by low-molecular-weight thiols to regenerate YajL and reduced proteins. Involved in biogenesis of ribosomal proteins, probably as a ribosomal protein-folding chaperone. Confers resistance to oxidative stress. Plays an important role in protection against electrophile/carbonyl stress. The chaperone activity reported for YajL is probably recruited to execute its deglycase activity, to interact with non-native glycated proteins and gain access to partially buried glycated sites. Also displays an apparent glyoxalase activity that in fact reflects its deglycase activity. This chain is Protein/nucleic acid deglycase 3 (yajL), found in Escherichia coli (strain K12).